The chain runs to 1054 residues: Carbamoyl phosphate synthase large chain (1054 aa).

The segment at 1–402 is carboxyphosphate synthetic domain; that stretch reads MPRRDDIRSI…SLLKAMASLE (402 aa). ATP is bound by residues Arg129, Arg169, Gly175, Gly176, Arg208, Val210, Glu215, Gly241, Val242, His243, Gln285, and Glu299. An ATP-grasp 1 domain is found at 133 to 328; it reads REAMERIGLR…IAKIAARLAV (196 aa). Mg(2+) contacts are provided by Gln285, Glu299, and Asn301. Gln285, Glu299, and Asn301 together coordinate Mn(2+). Residues 403–531 are oligomerization domain; it reads IETRDIQARL…YYYSTYEQED (129 aa). The tract at residues 532 to 914 is carbamoyl phosphate synthetic domain; the sequence is EVERGENPSV…AFAKALAAAG (383 aa). In terms of domain architecture, ATP-grasp 2 spans 658-849; it reads GRLLRELGIP…LARLATRVLL (192 aa). 9 residues coordinate ATP: Arg694, Lys733, Glu740, Gly765, Val766, His767, Ser768, Gln808, and Glu820. Positions 808, 820, and 822 each coordinate Mg(2+). Mn(2+) contacts are provided by Gln808, Glu820, and Asn822. In terms of domain architecture, MGS-like spans 915–1054; sequence QRLPESGRVY…SLQDLYAART (140 aa). Residues 915–1054 are allosteric domain; that stretch reads QRLPESGRVY…SLQDLYAART (140 aa).

It belongs to the CarB family. As to quaternary structure, composed of two chains; the small (or glutamine) chain promotes the hydrolysis of glutamine to ammonia, which is used by the large (or ammonia) chain to synthesize carbamoyl phosphate. Tetramer of heterodimers (alpha,beta)4. Mg(2+) serves as cofactor. The cofactor is Mn(2+).

It catalyses the reaction hydrogencarbonate + L-glutamine + 2 ATP + H2O = carbamoyl phosphate + L-glutamate + 2 ADP + phosphate + 2 H(+). It carries out the reaction hydrogencarbonate + NH4(+) + 2 ATP = carbamoyl phosphate + 2 ADP + phosphate + 2 H(+). Its pathway is amino-acid biosynthesis; L-arginine biosynthesis; carbamoyl phosphate from bicarbonate: step 1/1. It functions in the pathway pyrimidine metabolism; UMP biosynthesis via de novo pathway; (S)-dihydroorotate from bicarbonate: step 1/3. Functionally, large subunit of the glutamine-dependent carbamoyl phosphate synthetase (CPSase). CPSase catalyzes the formation of carbamoyl phosphate from the ammonia moiety of glutamine, carbonate, and phosphate donated by ATP, constituting the first step of 2 biosynthetic pathways, one leading to arginine and/or urea and the other to pyrimidine nucleotides. The large subunit (synthetase) binds the substrates ammonia (free or transferred from glutamine from the small subunit), hydrogencarbonate and ATP and carries out an ATP-coupled ligase reaction, activating hydrogencarbonate by forming carboxy phosphate which reacts with ammonia to form carbamoyl phosphate. The chain is Carbamoyl phosphate synthase large chain from Rubrobacter xylanophilus (strain DSM 9941 / JCM 11954 / NBRC 16129 / PRD-1).